The sequence spans 1194 residues: UPF0507 protein PICST_55861 (1194 aa).

The VPS9 domain maps to 324 to 475; that stretch reads QSYDPEAVKF…LSSSLSDELS (152 aa).

It belongs to the UPF0507 family.

The sequence is that of UPF0507 protein PICST_55861 from Scheffersomyces stipitis (strain ATCC 58785 / CBS 6054 / NBRC 10063 / NRRL Y-11545) (Yeast).